Reading from the N-terminus, the 359-residue chain is Type-1 angiotensin II receptor (359 aa).

Topologically, residues 1 to 25 (MILNSSTEDGIKRIQDDCPKAGRHN) are extracellular. Asparagine 4 carries N-linked (GlcNAc...) asparagine glycosylation. 2 residues coordinate angiotensin II: glutamine 15 and aspartate 17. 2 disulfides stabilise this stretch: cysteine 18/cysteine 274 and cysteine 101/cysteine 180. The helical transmembrane segment at 26 to 55 (YIFIMIPTLYSIIFVVGLFGNSLVVIVIYF) threads the bilayer. The Cytoplasmic portion of the chain corresponds to 56–61 (YMKLKT). Residues 62–89 (VASVFLLNLALADLCFLLTLPLWAVYTA) traverse the membrane as a helical segment. The Extracellular portion of the chain corresponds to 90–98 (MEYRWPFGN). A helical membrane pass occupies residues 99 to 125 (YLCKIASGSVSFNLYASVFLLTCLSID). Over 126–141 (RYLAIVHPMKSRLRRT) the chain is Cytoplasmic. A helical membrane pass occupies residues 142 to 165 (MLVAKVTCIIIWLLAGLASLPTII). Over 166-190 (HRNVFFIENTNITVCAFHYESQNST) the chain is Extracellular. Residue arginine 167 participates in angiotensin II binding. Asparagine 176 carries an N-linked (GlcNAc...) asparagine glycan. The angiotensin II site is built by phenylalanine 182, histidine 183, and tyrosine 184. N-linked (GlcNAc...) asparagine glycosylation occurs at asparagine 188. The helical transmembrane segment at 191–216 (LPVGLGLTKNILGFLFPFLIILTSYT) threads the bilayer. Position 199 (lysine 199) interacts with angiotensin II. Topologically, residues 217–239 (LIWKTLKKAYEIQKNKPRKDDIF) are cytoplasmic. A helical transmembrane segment spans residues 240-268 (KIILAIVLFFFFSWVPHQIFTFMDVLIQL). The Extracellular portion of the chain corresponds to 269-278 (GLIRDCKIED). Residues 279–304 (IVDTAMPITICLAYFNNCLNPPFYGF) form a helical membrane-spanning segment. Residues 305–359 (LGKKFKKYFLQLLKYIPPKAKSHSNLSTKMSTLSYRPSENGNSSTKKPAPCTEVE) lie on the Cytoplasmic side of the membrane. Residues 335 to 350 (STLSYRPSENGNSSTK) are compositionally biased toward polar residues. Residues 335 to 359 (STLSYRPSENGNSSTKKPAPCTEVE) form a disordered region. Cysteine 355 carries S-palmitoyl cysteine lipidation.

It belongs to the G-protein coupled receptor 1 family. In terms of assembly, interacts with MAS1. Interacts with ARRB1. Interacts with FLNA (via filamin repeat 21); increases PKA-mediated phosphorylation of FLNA. C-terminal Ser or Thr residues may be phosphorylated.

The protein localises to the cell membrane. Functionally, receptor for angiotensin II, a vasoconstricting peptide, which acts as a key regulator of blood pressure and sodium retention by the kidney. The activated receptor in turn couples to G-alpha proteins G(q) (GNAQ, GNA11, GNA14 or GNA15) and thus activates phospholipase C and increases the cytosolic Ca(2+) concentrations, which in turn triggers cellular responses such as stimulation of protein kinase C. The protein is Type-1 angiotensin II receptor (AGTR1) of Ovis aries (Sheep).